Consider the following 425-residue polypeptide: cAMP/cGMP-dependent 3',5'-cAMP/cGMP phosphodiesterase 7 (425 aa).

Residues 1–17 (MKYLILILIFFIEINNG) form the signal peptide.

The protein belongs to the cyclic nucleotide phosphodiesterase class-II family.

It is found in the secreted. The protein resides in the extracellular space. Its subcellular location is the cell surface. The catalysed reaction is 3',5'-cyclic AMP + H2O = AMP + H(+). It catalyses the reaction 3',5'-cyclic GMP + H2O = GMP + H(+). With respect to regulation, inhibited by dithiotreitol (DTT). Its function is as follows. Phosphodiesterase with dual cAMP/cGMP specificity. However, displays a preference for cAMP over cGMP. Seems to regulate cAMP/cGMP concentration especially during cell aggregation. The sequence is that of cAMP/cGMP-dependent 3',5'-cAMP/cGMP phosphodiesterase 7 (pde7) from Dictyostelium discoideum (Social amoeba).